A 197-amino-acid chain; its full sequence is NADH-quinone oxidoreductase subunit B (197 aa).

The [4Fe-4S] cluster site is built by Cys76, Cys77, Cys141, and Cys171.

This sequence belongs to the complex I 20 kDa subunit family. In terms of assembly, NDH-1 is composed of 14 different subunits. Subunits NuoB, C, D, E, F, and G constitute the peripheral sector of the complex. The cofactor is [4Fe-4S] cluster.

The protein localises to the cell inner membrane. It carries out the reaction a quinone + NADH + 5 H(+)(in) = a quinol + NAD(+) + 4 H(+)(out). Functionally, NDH-1 shuttles electrons from NADH, via FMN and iron-sulfur (Fe-S) centers, to quinones in the respiratory chain. The immediate electron acceptor for the enzyme in this species is believed to be ubiquinone. Couples the redox reaction to proton translocation (for every two electrons transferred, four hydrogen ions are translocated across the cytoplasmic membrane), and thus conserves the redox energy in a proton gradient. The chain is NADH-quinone oxidoreductase subunit B from Methylobacterium nodulans (strain LMG 21967 / CNCM I-2342 / ORS 2060).